Reading from the N-terminus, the 1010-residue chain is Phosphatidylserine decarboxylase proenzyme 2 (1010 aa).

C2 domains follow at residues 1–114 (MSQA…SSWE) and 247–370 (DFES…DKPC). Residues aspartate 342, serine 345, and aspartate 348 each contribute to the Ca(2+) site. The region spanning 458–493 (LRRQLWMHLLQGNDTQMKGTLDLIELNYFVDCLGSN) is the EF-hand domain. Active-site charge relay system; for autoendoproteolytic cleavage activity residues include aspartate 734, histidine 793, and serine 880. The active-site Schiff-base intermediate with substrate; via pyruvic acid; for decarboxylase activity is the serine 880. Position 880 is a pyruvic acid (Ser); by autocatalysis (serine 880).

The protein belongs to the phosphatidylserine decarboxylase family. PSD-B subfamily. Eukaryotic type II sub-subfamily. As to quaternary structure, heterodimer of a large membrane-associated beta subunit and a small pyruvoyl-containing alpha subunit. Interacts with pstB2. This interaction may be a means to structurally tether the donor membrane (ER) harboring PstB2 to acceptor membranes (Golgi/endosomes) harboring PSD2 during PtdSer transport to the site of PtdEtn synthesis. The cofactor is pyruvate. Requires Ca(2+) as cofactor. Is synthesized initially as an inactive proenzyme. Formation of the active enzyme involves a self-maturation process in which the active site pyruvoyl group is generated from an internal serine residue via an autocatalytic post-translational modification. Two non-identical subunits are generated from the proenzyme in this reaction, and the pyruvate is formed at the N-terminus of the alpha chain, which is derived from the carboxyl end of the proenzyme. The autoendoproteolytic cleavage occurs by a canonical serine protease mechanism, in which the side chain hydroxyl group of the serine supplies its oxygen atom to form the C-terminus of the beta chain, while the remainder of the serine residue undergoes an oxidative deamination to produce ammonia and the pyruvoyl prosthetic group on the alpha chain. During this reaction, the Ser that is part of the protease active site of the proenzyme becomes the pyruvoyl prosthetic group, which constitutes an essential element of the active site of the mature decarboxylase.

It is found in the golgi apparatus membrane. The protein localises to the endosome membrane. It catalyses the reaction a 1,2-diacyl-sn-glycero-3-phospho-L-serine + H(+) = a 1,2-diacyl-sn-glycero-3-phosphoethanolamine + CO2. It functions in the pathway phospholipid metabolism; phosphatidylethanolamine biosynthesis; phosphatidylethanolamine from CDP-diacylglycerol: step 2/2. Its function is as follows. Catalyzes the formation of phosphatidylethanolamine (PtdEtn) from phosphatidylserine (PtdSer). Plays a central role in phospholipid metabolism and in the interorganelle trafficking of phosphatidylserine. The sequence is that of Phosphatidylserine decarboxylase proenzyme 2 from Komagataella phaffii (strain GS115 / ATCC 20864) (Yeast).